The sequence spans 408 residues: Probable medium-chain specific acyl-CoA dehydrogenase 2, mitochondrial (408 aa).

The transit peptide at 1 to 5 (MLSRL) directs the protein to the mitochondrion. Residues 143–152 (YCVTEPGAGS) and 176–178 (WIT) contribute to the FAD site. Serine 152 is a substrate binding site. 263–266 (DMTR) serves as a coordination point for substrate. Residues 291-293 (RKA), 301-302 (HQ), and 355-359 (MLFRC) each bind FAD. Glutamate 382 functions as the Proton acceptor in the catalytic mechanism. Glycine 383 contacts substrate. FAD is bound at residue 384 to 386 (TSQ). Arginine 394 provides a ligand contact to substrate.

It belongs to the acyl-CoA dehydrogenase family. In terms of assembly, homotetramer. The cofactor is FAD.

Its subcellular location is the mitochondrion matrix. It carries out the reaction a medium-chain 2,3-saturated fatty acyl-CoA + oxidized [electron-transfer flavoprotein] + H(+) = a medium-chain (2E)-enoyl-CoA + reduced [electron-transfer flavoprotein]. It functions in the pathway lipid metabolism; mitochondrial fatty acid beta-oxidation. In terms of biological role, this enzyme is specific for acyl chain lengths of 4 to 16. The chain is Probable medium-chain specific acyl-CoA dehydrogenase 2, mitochondrial from Caenorhabditis briggsae.